The sequence spans 422 residues: ATP phosphoribosyltransferase regulatory subunit (422 aa).

The protein belongs to the class-II aminoacyl-tRNA synthetase family. HisZ subfamily. As to quaternary structure, heteromultimer composed of HisG and HisZ subunits.

The protein localises to the cytoplasm. Its pathway is amino-acid biosynthesis; L-histidine biosynthesis; L-histidine from 5-phospho-alpha-D-ribose 1-diphosphate: step 1/9. In terms of biological role, required for the first step of histidine biosynthesis. May allow the feedback regulation of ATP phosphoribosyltransferase activity by histidine. This is ATP phosphoribosyltransferase regulatory subunit from Clostridium botulinum (strain 657 / Type Ba4).